Here is a 153-residue protein sequence, read N- to C-terminus: Insulin-like growth factor 1 (153 aa).

A b region spans residues 49–77 (GPETLCGAELVDALQFVCGDRGFYFNKPT). 3 disulfides stabilise this stretch: Cys-54–Cys-96, Cys-66–Cys-109, and Cys-95–Cys-100. Positions 78 to 89 (GYGSSSRRAPQT) are c. An a region spans residues 90-110 (GIVDECCFRSCDLRRLEMYCA). A d region spans residues 111 to 118 (PLKPAKSA). Positions 119 to 153 (RSVRAQRHTDMPKAQKEVHLKNASRGSAGNKNYRM) are cleaved as a propeptide — e peptide. Residues 120–153 (SVRAQRHTDMPKAQKEVHLKNASRGSAGNKNYRM) are disordered. Residues 125–138 (RHTDMPKAQKEVHL) show a composition bias toward basic and acidic residues. The segment covering 142 to 153 (SRGSAGNKNYRM) has biased composition (polar residues).

It belongs to the insulin family. In terms of assembly, forms a ternary complex with IGFR1 and ITGAV:ITGB3. Forms a ternary complex with IGFR1 and ITGA6:ITGB4. Forms a ternary complex with IGFBP3 and ALS.

It localises to the secreted. In terms of biological role, the insulin-like growth factors, isolated from plasma, are structurally and functionally related to insulin but have a much higher growth-promoting activity. May be a physiological regulator of [1-14C]-2-deoxy-D-glucose (2DG) transport and glycogen synthesis in osteoblasts. Stimulates glucose transport in bone-derived osteoblastic (PyMS) cells and is effective at much lower concentrations than insulin, not only regarding glycogen and DNA synthesis but also with regard to enhancing glucose uptake. May play a role in synapse maturation. Ca(2+)-dependent exocytosis of IGF1 is required for sensory perception of smell in the olfactory bulb. Acts as a ligand for IGF1R. Binds to the alpha subunit of IGF1R, leading to the activation of the intrinsic tyrosine kinase activity which autophosphorylates tyrosine residues in the beta subunit thus initiating a cascade of down-stream signaling events leading to activation of the PI3K-AKT/PKB and the Ras-MAPK pathways. Binds to integrins ITGAV:ITGB3 and ITGA6:ITGB4. Its binding to integrins and subsequent ternary complex formation with integrins and IGFR1 are essential for IGF1 signaling. Induces the phosphorylation and activation of IGFR1, MAPK3/ERK1, MAPK1/ERK2 and AKT1. As part of the MAPK/ERK signaling pathway, acts as a negative regulator of apoptosis in cardiomyocytes via promotion of STUB1/CHIP-mediated ubiquitination and degradation of ICER-type isoforms of CREM. The sequence is that of Insulin-like growth factor 1 from Canis lupus familiaris (Dog).